A 515-amino-acid chain; its full sequence is Putative cytochrome P450 CYP13A2 (515 aa).

Cysteine 460 contacts heme.

This sequence belongs to the cytochrome P450 family. Requires heme as cofactor.

Cytochromes P450 are a group of heme-thiolate monooxygenases. They oxidize a variety of structurally unrelated compounds, including steroids, fatty acids, and xenobiotics. The protein is Putative cytochrome P450 CYP13A2 (cyp-13A2) of Caenorhabditis elegans.